Consider the following 337-residue polypeptide: 5-formaminoimidazole-4-carboxamide-1-(beta)-D-ribofuranosyl 5'-monophosphate synthetase (337 aa).

Residues His-9 and Ser-73 each contribute to the 5-amino-1-(5-phospho-beta-D-ribosyl)imidazole-4-carboxamide site. In terms of domain architecture, ATP-grasp spans 94-324 (KKIFEWEADQ…IGRRIAREIR (231 aa)). Residues 124 to 184 (PEDV…VPMY) and Glu-206 each bind ATP. Residue Asn-234 participates in 5-amino-1-(5-phospho-beta-D-ribosyl)imidazole-4-carboxamide binding. 2 residues coordinate Mg(2+): Glu-273 and Glu-286.

This sequence belongs to the phosphohexose mutase family. The cofactor is Mg(2+). Mn(2+) is required as a cofactor.

The enzyme catalyses 5-amino-1-(5-phospho-beta-D-ribosyl)imidazole-4-carboxamide + formate + ATP = 5-formamido-1-(5-phospho-D-ribosyl)imidazole-4-carboxamide + ADP + phosphate. The protein operates within purine metabolism; IMP biosynthesis via de novo pathway; 5-formamido-1-(5-phospho-D-ribosyl)imidazole-4-carboxamide from 5-amino-1-(5-phospho-D-ribosyl)imidazole-4-carboxamide (formate route): step 1/1. In terms of biological role, catalyzes the ATP- and formate-dependent formylation of 5-aminoimidazole-4-carboxamide-1-beta-d-ribofuranosyl 5'-monophosphate (AICAR) to 5-formaminoimidazole-4-carboxamide-1-beta-d-ribofuranosyl 5'-monophosphate (FAICAR) in the absence of folates. In Saccharolobus solfataricus (strain ATCC 35092 / DSM 1617 / JCM 11322 / P2) (Sulfolobus solfataricus), this protein is 5-formaminoimidazole-4-carboxamide-1-(beta)-D-ribofuranosyl 5'-monophosphate synthetase.